Reading from the N-terminus, the 84-residue chain is U4-theraphotoxin-Hhn1b (84 aa).

The signal sequence occupies residues 1 to 22 (MKVTLTAILTCAAVLVLHTTAA). Residues 23-47 (EELEESQLMEVGMPDTELAAVDEER) constitute a propeptide that is removed on maturation. 3 disulfides stabilise this stretch: Cys-51–Cys-65, Cys-55–Cys-76, and Cys-70–Cys-81.

Belongs to the neurotoxin 12 (Hwtx-2) family. 02 (Hwtx-2) subfamily. As to expression, expressed by the venom gland.

Its subcellular location is the secreted. In terms of biological role, postsynaptic neurotoxin. The polypeptide is U4-theraphotoxin-Hhn1b (Cyriopagopus hainanus (Chinese bird spider)).